We begin with the raw amino-acid sequence, 142 residues long: Large ribosomal subunit protein uL13 (142 aa).

This sequence belongs to the universal ribosomal protein uL13 family. Part of the 50S ribosomal subunit.

In terms of biological role, this protein is one of the early assembly proteins of the 50S ribosomal subunit, although it is not seen to bind rRNA by itself. It is important during the early stages of 50S assembly. The sequence is that of Large ribosomal subunit protein uL13 from Herminiimonas arsenicoxydans.